Consider the following 246-residue polypeptide: Sugar fermentation stimulation protein homolog (246 aa).

The protein belongs to the SfsA family.

The chain is Sugar fermentation stimulation protein homolog from Prochlorococcus marinus (strain MIT 9312).